The chain runs to 456 residues: Serine--tRNA ligase (456 aa).

2 disordered regions span residues 107–130 (PHSS…GTPP) and 229–253 (FLEN…QDDD). Positions 114–125 (GRSESDNREVRR) are enriched in basic and acidic residues. Residues 239–248 (LPSNSNSPQG) are compositionally biased toward polar residues. 260–262 (TSE) is a binding site for L-serine. 291–293 (RSE) lines the ATP pocket. Glutamate 314 lines the L-serine pocket. 378–381 (EISS) contacts ATP. Residue serine 413 coordinates L-serine.

The protein belongs to the class-II aminoacyl-tRNA synthetase family. Type-1 seryl-tRNA synthetase subfamily. In terms of assembly, homodimer. The tRNA molecule binds across the dimer.

Its subcellular location is the cytoplasm. It carries out the reaction tRNA(Ser) + L-serine + ATP = L-seryl-tRNA(Ser) + AMP + diphosphate + H(+). It catalyses the reaction tRNA(Sec) + L-serine + ATP = L-seryl-tRNA(Sec) + AMP + diphosphate + H(+). Its pathway is aminoacyl-tRNA biosynthesis; selenocysteinyl-tRNA(Sec) biosynthesis; L-seryl-tRNA(Sec) from L-serine and tRNA(Sec): step 1/1. Functionally, catalyzes the attachment of serine to tRNA(Ser). Is also able to aminoacylate tRNA(Sec) with serine, to form the misacylated tRNA L-seryl-tRNA(Sec), which will be further converted into selenocysteinyl-tRNA(Sec). The chain is Serine--tRNA ligase from Nitrosospira multiformis (strain ATCC 25196 / NCIMB 11849 / C 71).